The following is a 114-amino-acid chain: Small ribosomal subunit protein bS16 (114 aa).

The protein belongs to the bacterial ribosomal protein bS16 family.

The polypeptide is Small ribosomal subunit protein bS16 (Prochlorococcus marinus subsp. pastoris (strain CCMP1986 / NIES-2087 / MED4)).